Here is a 127-residue protein sequence, read N- to C-terminus: Fumarate reductase subunit C (127 aa).

The next 3 membrane-spanning stretches (helical) occupy residues 30–50, 67–87, and 107–127; these read ATIL…GCLV, IVVV…QTFF, and IIVL…LVLV.

The protein belongs to the FrdC family. As to quaternary structure, part of an enzyme complex containing four subunits: a flavoprotein (FrdA), an iron-sulfur protein (FrdB), and two hydrophobic anchor proteins (FrdC and FrdD).

It is found in the cell inner membrane. Functionally, anchors the catalytic components of the fumarate reductase complex to the cell membrane, binds quinones. The sequence is that of Fumarate reductase subunit C from Photobacterium profundum (strain SS9).